The chain runs to 263 residues: Hydroxyethylthiazole kinase (263 aa).

Residue M41 participates in substrate binding. Positions 117 and 163 each coordinate ATP. A190 contributes to the substrate binding site.

It belongs to the Thz kinase family. The cofactor is Mg(2+).

It carries out the reaction 5-(2-hydroxyethyl)-4-methylthiazole + ATP = 4-methyl-5-(2-phosphooxyethyl)-thiazole + ADP + H(+). Its pathway is cofactor biosynthesis; thiamine diphosphate biosynthesis; 4-methyl-5-(2-phosphoethyl)-thiazole from 5-(2-hydroxyethyl)-4-methylthiazole: step 1/1. Its function is as follows. Catalyzes the phosphorylation of the hydroxyl group of 4-methyl-5-beta-hydroxyethylthiazole (THZ). In Haemophilus influenzae (strain PittEE), this protein is Hydroxyethylthiazole kinase.